Here is a 941-residue protein sequence, read N- to C-terminus: Coiled-coil and C2 domain-containing protein 1A (941 aa).

Thr91 is modified (phosphothreonine). Disordered regions lie at residues 183–248 and 301–336; these read TINE…PCSP and SRLPPPPDQLSPEPPLPAAQPVTPASTLTRPEVPQP. The span at 228–239 shows a compositional bias: polar residues; the sequence is APSTTAQTSAKP. Ser247 carries the phosphoserine modification. Residues 303 to 318 show a composition bias toward pro residues; the sequence is LPPPPDQLSPEPPLPA. The stretch at 338 to 384 forms a coiled coil; the sequence is KNLLEALEQRMERYHVAAAQAKAKGDQRKARMHERIVKQYQDAIRAH. The disordered stretch occupies residues 428 to 482; the sequence is ANHEEGSDEEEEETPKKNTPAASTAQPKASPSRAPPSGPAPAGKAASKGTSTRAQ. The residue at position 434 (Ser434) is a Phosphoserine. Positions 467–476 are enriched in low complexity; it reads APAGKAASKG. The stretch at 475-508 forms a coiled coil; the sequence is KGTSTRAQQQLAFLEGRKKQLLQAALRAKQKNDV. Residues 628–762 enclose the C2 domain; that stretch reads RFEQRTFSVI…ETACEVHEIL (135 aa).

Belongs to the CC2D1 family. As to expression, strongly expressed in several brain areas including frontal cortex, cortex, mesencephalon, hippocampus, midbrain and hypothalamus. Also expressed in testis and at low levels in pituitary, liver and kidney. In brain the highest levels are detected in hippocampal pyramidal cells and raphe nuclei.

It is found in the cytoplasm. The protein resides in the nucleus. The protein localises to the cytoskeleton. It localises to the microtubule organizing center. Its subcellular location is the centrosome. Functionally, transcription factor that binds specifically to the DRE (dual repressor element) and represses 5-HT1A gene transcription though this element. Mediates HDAC-independent repression of HTR1A promoter. CAMK2G inhibits CC2D1a-induced repression of the HTR1A. May play a role in the altered regulation of 5-HT1A receptors associated with anxiety and major depression. Performs essential function in controlling functional maturation of synapses. The polypeptide is Coiled-coil and C2 domain-containing protein 1A (Cc2d1a) (Rattus norvegicus (Rat)).